We begin with the raw amino-acid sequence, 462 residues long: MQLRKMQTVKKEQASLDASSNVDKMMVLNSALTEVSEDSTTGEELLLSEGSVGKNKSSACRRKREFIPDEKKDAMYWEKRRKNNEAAKRSREKRRLNDLVLENKLIALGEENATLKAELLSLKLKFGLISSTAYAQEIQKLSNSTAVYFQDYQTSKSNVSSFVDEHEPSMVSSSCISVIKHSPQSSLSDVSEVSSVEHTQESSVQGSCRSPENKFQIIKQEPMELESYTREPRDDRGSYTASIYQNYMGNSFSGYSHSPPLLQVNRSSSNSPRTSETDDGVVGKSSDGEDEQQVPKGPIHSPVELKHVHATVVKVPEVNSSALPHKLRIKAKAMQIKVEAFDNEFEATQKLSSPIDMTSKRHFELEKHSAPSMVHSSLTPFSVQVTNIQDWSLKSEHWHQKELSGKTQNSFKTGVVEMKDSGYKVSDPENLYLKQGIANLSAEVVSLKRLIATQPISASDSG.

Residue K24 forms a Glycyl lysine isopeptide (Lys-Gly) (interchain with G-Cter in SUMO2) linkage. The 64-residue stretch at 73 to 136 (DAMYWEKRRK…GLISSTAYAQ (64 aa)) folds into the bZIP domain. Residues 79–95 (KRRKNNEAAKRSREKRR) are basic motif. The leucine-zipper stretch occupies residues 99-106 (LVLENKLI). Disordered stretches follow at residues 189 to 237 (DVSE…DDRG) and 258 to 302 (SPPL…IHSP). The span at 201–210 (ESSVQGSCRS) shows a compositional bias: polar residues. K214 is covalently cross-linked (Glycyl lysine isopeptide (Lys-Gly) (interchain with G-Cter in SUMO2)). A Glycyl lysine isopeptide (Lys-Gly) (interchain with G-Cter in SUMO1); alternate cross-link involves residue K219. K219 participates in a covalent cross-link: Glycyl lysine isopeptide (Lys-Gly) (interchain with G-Cter in SUMO2); alternate. Positions 227–237 (SYTREPRDDRG) are enriched in basic and acidic residues. The span at 264–274 (VNRSSSNSPRT) shows a compositional bias: polar residues. Positions 299–363 (IHSPVELKHV…PIDMTSKRHF (65 aa)) are necessary for transcriptional repression and sufficient for interaction with DR1. Residue S301 is modified to Phosphoserine. Glycyl lysine isopeptide (Lys-Gly) (interchain with G-Cter in SUMO2) cross-links involve residues K306, K314, K326, K332, K337, and K350. Residue S353 is modified to Phosphoserine. Residues K360, K394, K401, K406, K412, K419, K424, K434, and K448 each participate in a glycyl lysine isopeptide (Lys-Gly) (interchain with G-Cter in SUMO2) cross-link.

This sequence belongs to the bZIP family. NFIL3 subfamily. As to quaternary structure, homodimer. Binds DNA as a dimer. Interacts with DR1. Interacts with PER2 and CRY2. Interacts with NR0B2. Interacts with MYSM1. As to expression, expressed in bladder stomach, thyroid, spinal cord, lymph node, trachea, adrenal gland, bone marrow and muscle.

It localises to the nucleus. In terms of biological role, acts as a transcriptional regulator that recognizes and binds to the sequence 5'-[GA]TTA[CT]GTAA[CT]-3', a sequence present in many cellular and viral promoters. Represses transcription from promoters with activating transcription factor (ATF) sites. Represses promoter activity in osteoblasts. Represses transcriptional activity of PER1. Represses transcriptional activity of PER2 via the B-site on the promoter. Activates transcription from the interleukin-3 promoter in T-cells. Competes for the same consensus-binding site with PAR DNA-binding factors (DBP, HLF and TEF). Component of the circadian clock that acts as a negative regulator for the circadian expression of PER2 oscillation in the cell-autonomous core clock. Protects pro-B cells from programmed cell death. Represses the transcription of CYP2A5. Positively regulates the expression and activity of CES2 by antagonizing the repressive action of NR1D1 on CES2. Required for the development of natural killer cell precursors. The polypeptide is Nuclear factor interleukin-3-regulated protein (NFIL3) (Homo sapiens (Human)).